We begin with the raw amino-acid sequence, 635 residues long: Threonine--tRNA ligase (635 aa).

One can recognise a TGS domain in the interval 1 to 61 (MIKITLKDGK…HKDSSLEILT (61 aa)). The interval 242-532 (DHRKLGKELD…LIEQYAGAFP (291 aa)) is catalytic. Zn(2+) contacts are provided by Cys-333, His-384, and His-509.

It belongs to the class-II aminoacyl-tRNA synthetase family. Homodimer. Zn(2+) serves as cofactor.

It localises to the cytoplasm. It catalyses the reaction tRNA(Thr) + L-threonine + ATP = L-threonyl-tRNA(Thr) + AMP + diphosphate + H(+). Functionally, catalyzes the attachment of threonine to tRNA(Thr) in a two-step reaction: L-threonine is first activated by ATP to form Thr-AMP and then transferred to the acceptor end of tRNA(Thr). Also edits incorrectly charged L-seryl-tRNA(Thr). The sequence is that of Threonine--tRNA ligase from Clostridium botulinum (strain Loch Maree / Type A3).